The following is a 640-amino-acid chain: Endoglucanase 1 (640 aa).

Positions 1-24 (MARRGGAAASSSMANLLGVALVLA) are cleaved as a signal peptide. The active-site Nucleophile is the Asp-94. Catalysis depends on residues His-433, Asp-485, and Glu-494. N-linked (GlcNAc...) asparagine glycosylation is found at Asn-528 and Asn-548.

The protein belongs to the glycosyl hydrolase 9 (cellulase E) family. In terms of tissue distribution, expressed in roots, leaf sheaths and flowers.

It is found in the secreted. The enzyme catalyses Endohydrolysis of (1-&gt;4)-beta-D-glucosidic linkages in cellulose, lichenin and cereal beta-D-glucans.. The polypeptide is Endoglucanase 1 (GLU7) (Oryza sativa subsp. japonica (Rice)).